A 130-amino-acid polypeptide reads, in one-letter code: Probable 4-amino-4-deoxy-L-arabinose-phosphoundecaprenol flippase subunit ArnF (130 aa).

At Met-1–Gly-4 the chain is on the cytoplasmic side. A helical transmembrane segment spans residues Trp-5–Met-25. The Periplasmic portion of the chain corresponds to His-26 to Pro-44. The chain crosses the membrane as a helical span at residues Leu-45–Ala-65. The Cytoplasmic portion of the chain corresponds to Leu-66–Ala-74. Residues Tyr-75 to Phe-95 traverse the membrane as a helical segment. Residues Asn-96–Arg-103 lie on the Periplasmic side of the membrane. Residues Leu-104 to Lys-124 form a helical membrane-spanning segment. Residues Gly-125–Arg-130 are Cytoplasmic-facing.

The protein belongs to the ArnF family. Heterodimer of ArnE and ArnF.

It localises to the cell inner membrane. Its pathway is bacterial outer membrane biogenesis; lipopolysaccharide biosynthesis. Functionally, translocates 4-amino-4-deoxy-L-arabinose-phosphoundecaprenol (alpha-L-Ara4N-phosphoundecaprenol) from the cytoplasmic to the periplasmic side of the inner membrane. The protein is Probable 4-amino-4-deoxy-L-arabinose-phosphoundecaprenol flippase subunit ArnF of Sodalis glossinidius (strain morsitans).